The sequence spans 183 residues: Alkyl hydroperoxide reductase AhpD (183 aa).

The active-site Proton donor is Cys-132. A disulfide bridge connects residues Cys-132 and Cys-135. Residue Cys-135 is the Cysteine sulfenic acid (-SOH) intermediate of the active site.

It belongs to the AhpD family.

The catalysed reaction is N(6)-[(R)-dihydrolipoyl]-L-lysyl-[lipoyl-carrier protein] + a hydroperoxide = N(6)-[(R)-lipoyl]-L-lysyl-[lipoyl-carrier protein] + an alcohol + H2O. Its function is as follows. Antioxidant protein with alkyl hydroperoxidase activity. Required for the reduction of the AhpC active site cysteine residues and for the regeneration of the AhpC enzyme activity. This chain is Alkyl hydroperoxide reductase AhpD, found in Acidobacterium capsulatum (strain ATCC 51196 / DSM 11244 / BCRC 80197 / JCM 7670 / NBRC 15755 / NCIMB 13165 / 161).